Reading from the N-terminus, the 328-residue chain is Arabinose 5-phosphate isomerase KdsD (328 aa).

Residues 41–184 (ACEKMFNCTG…AVALLKARGF (144 aa)) enclose the SIS domain. Substrate-binding positions include 75 to 76 (GT), His-82, His-88, 114 to 123 (ALIPVLKRLH), and 148 to 150 (KVP). His-82 serves as a coordination point for Zn(2+). The CBS 1 domain occupies 210-268 (MHTGDEIPHVNKHATLRDALLEITRKNLGMTVICDESMKIDGIFTDGDLRRMFDMGGDM). Glu-275 contributes to the substrate binding site. The region spanning 277–328 (MTPGGIRVRPGILAVDALNLMQSRHITSVLVADGDQLLGVLHMHDLLRAGVV) is the CBS 2 domain.

This sequence belongs to the SIS family. GutQ/KpsF subfamily. In terms of assembly, homotetramer.

It catalyses the reaction D-arabinose 5-phosphate = D-ribulose 5-phosphate. Its pathway is carbohydrate biosynthesis; 3-deoxy-D-manno-octulosonate biosynthesis; 3-deoxy-D-manno-octulosonate from D-ribulose 5-phosphate: step 1/3. It functions in the pathway bacterial outer membrane biogenesis; lipopolysaccharide biosynthesis. Involved in the biosynthesis of 3-deoxy-D-manno-octulosonate (KDO), a unique 8-carbon sugar component of lipopolysaccharides (LPSs). Catalyzes the reversible aldol-ketol isomerization between D-ribulose 5-phosphate (Ru5P) and D-arabinose 5-phosphate (A5P). In Salmonella typhi, this protein is Arabinose 5-phosphate isomerase KdsD (kdsD).